We begin with the raw amino-acid sequence, 271 residues long: Orotidine 5'-phosphate decarboxylase (271 aa).

The active-site Proton donor is the Lys95.

Belongs to the OMP decarboxylase family. Type 2 subfamily.

It carries out the reaction orotidine 5'-phosphate + H(+) = UMP + CO2. It functions in the pathway pyrimidine metabolism; UMP biosynthesis via de novo pathway; UMP from orotate: step 2/2. This is Orotidine 5'-phosphate decarboxylase from Janthinobacterium sp. (strain Marseille) (Minibacterium massiliensis).